Reading from the N-terminus, the 427-residue chain is Ectoine TRAP transporter large permease protein TeaC (427 aa).

A run of 12 helical transmembrane segments spans residues 13–35, 49–69, 79–99, 103–123, 147–167, 172–192, 216–236, 237–257, 273–293, 320–340, 356–376, and 400–420; these read LLLG…FMMF, MAGI…AADI, LINM…VSTA, TLFG…GSPL, IAFL…SGTS, FIAG…YCVI, LALW…GGIF, SPTE…FVVF, GLIT…SWII, ICVA…ILVL, VLVG…PPFG, and FIFM…IALF.

Belongs to the TRAP transporter large permease family. In terms of assembly, the complex comprises the extracytoplasmic solute receptor protein TeaA, and the two transmembrane proteins TeaB and TeaC.

It localises to the cell inner membrane. Its function is as follows. Part of the tripartite ATP-independent periplasmic (TRAP) transport system TeaABC involved in the uptake of ectoine and hydroxyectoine in response to osmotic upshock. Probably functions as a recovery system for synthesized ectoine that leaks out of the cell. This chain is Ectoine TRAP transporter large permease protein TeaC (teaC), found in Halomonas elongata (strain ATCC 33173 / DSM 2581 / NBRC 15536 / NCIMB 2198 / 1H9).